The sequence spans 206 residues: Flavin prenyltransferase UbiX (206 aa).

FMN-binding positions include 14-16 (GAS), T40, 101-104 (SMGT), and R136. The dimethylallyl phosphate site is built by Y166 and K182.

Belongs to the UbiX/PAD1 family.

The catalysed reaction is dimethylallyl phosphate + FMNH2 = prenylated FMNH2 + phosphate. In terms of biological role, flavin prenyltransferase that catalyzes the synthesis of the prenylated FMN cofactor (prenyl-FMN) for 4-hydroxy-3-polyprenylbenzoic acid decarboxylase UbiD. The prenyltransferase is metal-independent and links a dimethylallyl moiety from dimethylallyl monophosphate (DMAP) to the flavin N5 and C6 atoms of FMN. This Halalkalibacterium halodurans (strain ATCC BAA-125 / DSM 18197 / FERM 7344 / JCM 9153 / C-125) (Bacillus halodurans) protein is Flavin prenyltransferase UbiX.